The following is a 718-amino-acid chain: Kinesin-2a (718 aa).

In terms of domain architecture, Kinesin motor spans 5–335 (NIKVIVRCRP…LRYADRAKQI (331 aa)). Position 97–104 (97–104 (GQTGAGKT)) interacts with ATP. G100, G102, K103, T104, and W105 together coordinate ADP. A Mg(2+)-binding site is contributed by T104. Positions 432–477 (SRKAADELEAKRRALAEAKQKRESELEQKEALNKEAIVTLTDLKSQ) form a coiled coil.

It belongs to the TRAFAC class myosin-kinesin ATPase superfamily. Kinesin family. Kinesin II subfamily. Monomer.

The protein resides in the cell projection. It localises to the cilium. The protein localises to the flagellum. Its subcellular location is the cytoplasm. It is found in the cytoskeleton. The protein resides in the flagellum axoneme. It localises to the flagellum basal body. Its function is as follows. Involved in anterograde intraflagellar transport (IFT). Involved in flagellar assembly. The polypeptide is Kinesin-2a (Giardia intestinalis (strain ATCC 50803 / WB clone C6) (Giardia lamblia)).